Consider the following 144-residue polypeptide: Large ribosomal subunit protein uL13 (144 aa).

This sequence belongs to the universal ribosomal protein uL13 family. Part of the 50S ribosomal subunit.

This protein is one of the early assembly proteins of the 50S ribosomal subunit, although it is not seen to bind rRNA by itself. It is important during the early stages of 50S assembly. This is Large ribosomal subunit protein uL13 from Chloroflexus aurantiacus (strain ATCC 29366 / DSM 635 / J-10-fl).